The following is a 523-amino-acid chain: GMP synthase [glutamine-hydrolyzing] (523 aa).

The 190-residue stretch at 9–198 folds into the Glutamine amidotransferase type-1 domain; the sequence is PVLVVDFGAQ…LTEIAGLEQN (190 aa). Residue cysteine 86 is the Nucleophile of the active site. Active-site residues include histidine 172 and glutamate 174. The region spanning 199–397 is the GMPS ATP-PPase domain; the sequence is WTAANIAEEL…LGLPEEIVGR (199 aa). 227 to 233 contributes to the ATP binding site; sequence SGGVDSA.

In terms of assembly, homodimer.

It catalyses the reaction XMP + L-glutamine + ATP + H2O = GMP + L-glutamate + AMP + diphosphate + 2 H(+). It functions in the pathway purine metabolism; GMP biosynthesis; GMP from XMP (L-Gln route): step 1/1. Its function is as follows. Catalyzes the synthesis of GMP from XMP. The sequence is that of GMP synthase [glutamine-hydrolyzing] from Corynebacterium glutamicum (strain R).